Reading from the N-terminus, the 92-residue chain is Transcription factor S4 (92 aa).

The ZR-N stretch occupies residues 1 to 31 (MRFCPKCGSFLKVKGNKMVCSKCGYSDHDVE). Zn(2+)-binding residues include Cys4, Cys7, Cys20, and Cys23. Residues 32–56 (KVILKENVAHENDKTIIADGETIEG) are flexible linker. The ZR-C stretch occupies residues 55 to 92 (EGRVAISLCPRCGSVRAILLNKKKRLYRCMTCNFVYNI). Cys63 and Cys66 together coordinate Zn(2+). Catalysis depends on residues Lys76, Lys77, and Lys78. Zn(2+)-binding residues include Cys83 and Cys86.

Belongs to the archaeal RpoM/eukaryotic RPA12/RPB9/RPC11 RNA polymerase family. In terms of assembly, interacts with RNA polymerase. Requires Zn(2+) as cofactor.

A potent inhibitor of RNA polymerase (RNAP) probably involved in viral defense. Destabilizes the transcription pre-initiation complex of TBP, TFB, DNA and RNAP, inhibits abortive transcription initiation, productive initiation and transcription elongation. Increases the RNAP KM for NTPs about 50-fold. Overexpression of TFS1-tip4 (TFS1 with the active tip of this protein, phenocopies this protein) in S.acidocaldarius MW001 leads to severe growth inhibition. When bound to RNAP induces conformational changes that widen the DNA-binding channel, probably destabilizing the interaction of DNA with RNAP. The sequence is that of Transcription factor S4 from Saccharolobus solfataricus (strain ATCC 35092 / DSM 1617 / JCM 11322 / P2) (Sulfolobus solfataricus).